The following is a 78-amino-acid chain: Large ribosomal subunit protein bL28 (78 aa).

It belongs to the bacterial ribosomal protein bL28 family.

This chain is Large ribosomal subunit protein bL28, found in Methylococcus capsulatus (strain ATCC 33009 / NCIMB 11132 / Bath).